The following is a 512-amino-acid chain: ATP synthase subunit alpha 2 (512 aa).

G169–T176 serves as a coordination point for ATP.

It belongs to the ATPase alpha/beta chains family. In terms of assembly, F-type ATPases have 2 components, CF(1) - the catalytic core - and CF(0) - the membrane proton channel. CF(1) has five subunits: alpha(3), beta(3), gamma(1), delta(1), epsilon(1). CF(0) has three main subunits: a(1), b(2) and c(9-12). The alpha and beta chains form an alternating ring which encloses part of the gamma chain. CF(1) is attached to CF(0) by a central stalk formed by the gamma and epsilon chains, while a peripheral stalk is formed by the delta and b chains.

The protein resides in the cell inner membrane. It catalyses the reaction ATP + H2O + 4 H(+)(in) = ADP + phosphate + 5 H(+)(out). Its function is as follows. Produces ATP from ADP in the presence of a proton gradient across the membrane. The alpha chain is a regulatory subunit. The protein is ATP synthase subunit alpha 2 of Vibrio campbellii (strain ATCC BAA-1116).